Here is a 271-residue protein sequence, read N- to C-terminus: Phosphate import ATP-binding protein PstB 2 (271 aa).

In terms of domain architecture, ABC transporter spans 25–266 (MATEDLHVYY…PQQKQTEDYI (242 aa)). 57–64 (GPSGCGKS) is an ATP binding site.

Belongs to the ABC transporter superfamily. Phosphate importer (TC 3.A.1.7) family. As to quaternary structure, the complex is composed of two ATP-binding proteins (PstB), two transmembrane proteins (PstC and PstA) and a solute-binding protein (PstS).

The protein resides in the cell membrane. The catalysed reaction is phosphate(out) + ATP + H2O = ADP + 2 phosphate(in) + H(+). Functionally, part of the ABC transporter complex PstSACB involved in phosphate import. Responsible for energy coupling to the transport system. This chain is Phosphate import ATP-binding protein PstB 2, found in Listeria monocytogenes serotype 4b (strain F2365).